Consider the following 1030-residue polypeptide: Toll-like receptor 9 (1030 aa).

An N-terminal signal peptide occupies residues 1-24; that stretch reads MGPRCTLHPLSLLVQVTALAAALA. Residues 25–816 are Extracellular-facing; the sequence is QGRLPAFLPC…LCLDETLSWN (792 aa). A disulfide bond links Cys34 and Cys44. 46-50 is a binding site for DNA; that stretch reads WLFLK. LRR repeat units lie at residues 61 to 84, 86 to 109, 121 to 146, 149 to 165, 166 to 189, 197 to 220, 222 to 241, 242 to 267, 282 to 305, 307 to 331, 332 to 355, 362 to 385, 389 to 412, 414 to 439, 469 to 493, 495 to 518, 519 to 542, 544 to 571, 573 to 597, 599 to 621, 626 to 649, 651 to 674, 675 to 698, 700 to 722, 723 to 746, and 748 to 771; these read RANV…DFVH, SSLR…HFPC, VPTL…SLVS, LSRT…LTGL, HALR…ALEV, LGNL…LPPS, ETLL…DLAN, LTAL…CREC, LSRL…WFRG, DRLQ…AFQG, LARL…HLHL, LRSL…TLQP, LPML…IFGA, PGLL…TREV, CKAF…MFAR, SRLE…QFVP, LTSL…SFTE, PRLE…SFVA, LPAL…LCSA, LCAL…LYLR, LRSL…ALDN, PKSL…SLTL, LPKL…SLPS, TQLR…FFAL, AKQL…WFGS, and VGNL…TFVG. N-linked (GlcNAc...) asparagine glycosylation is present at Asn63. Residues 71 to 76 and 94 to 108 contribute to the DNA site; these read SNRIHH and KWNC…MHFP. Cysteines 97 and 109 form a disulfide. N-linked (GlcNAc...) asparagine glycosylation is present at Asn128. DNA is bound by residues Tyr131, Arg151, and 178-180; that span reads YYK. Cys177 and Cys183 form a disulfide bridge. Asn199 carries an N-linked (GlcNAc...) asparagine glycan. DNA is bound at residue Tyr207. Residues Asn209 and Asn241 are each glycosylated (N-linked (GlcNAc...) asparagine). 2 disulfide bridges follow: Cys254-Cys267 and Cys257-Cys264. Cys257 carries the S-palmitoyl cysteine lipid modification. Arg261 provides a ligand contact to DNA. Cys264 carries S-palmitoyl cysteine lipidation. Residue Asn339 is glycosylated (N-linked (GlcNAc...) asparagine). Cys469 and Cys499 are disulfide-bonded. Asn512 is a glycosylation site (N-linked (GlcNAc...) asparagine). The N-linked (GlcNAc...) asparagine glycan is linked to Asn566. Residues Asn668 and Asn693 are each glycosylated (N-linked (GlcNAc...) asparagine). A glycan (N-linked (GlcNAc...) asparagine) is linked at Asn730. Disulfide bonds link Cys763–Cys789 and Cys765–Cys808. Residues 817 to 837 traverse the membrane as a helical segment; that stretch reads CFGISLLAMALGLVVPMLHHL. The Cytoplasmic portion of the chain corresponds to 838-1030; that stretch reads CGWDLWYCFH…NFCRGPTTAE (193 aa). The 146-residue stretch at 865–1010 folds into the TIR domain; that stretch reads LFYDAFVVFD…SFWAQLGTAL (146 aa).

It belongs to the Toll-like receptor family. In terms of assembly, monomer and homodimer. Exists as a monomer in the absence of unmethylated cytidine-phosphate-guanosine (CpG) ligand. Proteolytic processing of an insertion loop (Z-loop) is required for homodimerization upon binding to the unmethylated CpG ligand leading to its activation. Interacts with MYD88 via their respective TIR domains. Interacts with BTK. Interacts (via transmembrane domain) with UNC93B1. Interacts with CD300LH; the interaction may promote full activation of TLR9-triggered innate responses. Interacts with CNPY3 and HSP90B1; this interaction is required for proper folding in the endoplasmic reticulum. Interacts with SMPDL3B. Interacts with CD82; this interaction is essential for TLR9-dependent myddosome formation in response to CpG stimulation. Post-translationally, activated by proteolytic cleavage of the flexible loop between repeats LRR14 and LRR15 within the ectodomain. Cleavage requires UNC93B1. Proteolytically processed by first removing the majority of the ectodomain by either asparagine endopeptidase (AEP) or a cathepsin followed by a trimming event that is solely cathepsin mediated and required for optimal receptor signaling. Palmitoylated by ZDHHC3 in the Golgi regulates TLR9 trafficking from the Golgi to endosomes. Depalmitoylation by PPT1 controls the release of TLR9 from UNC93B1 in endosomes.

Its subcellular location is the endoplasmic reticulum membrane. It is found in the endosome. It localises to the lysosome. The protein localises to the cytoplasmic vesicle. The protein resides in the phagosome. Key component of innate and adaptive immunity. TLRs (Toll-like receptors) control host immune response against pathogens through recognition of molecular patterns specific to microorganisms. TLR9 is a nucleotide-sensing TLR which is activated by unmethylated cytidine-phosphate-guanosine (CpG) dinucleotides. Acts via MYD88 and TRAF6, leading to NF-kappa-B activation, cytokine secretion and the inflammatory response. Upon CpG stimulation, induces B-cell proliferation, activation, survival and antibody production. The sequence is that of Toll-like receptor 9 (TLR9) from Sus scrofa (Pig).